The primary structure comprises 406 residues: Acetate kinase (406 aa).

A Mg(2+)-binding site is contributed by Asn7. An ATP-binding site is contributed by Lys14. Substrate is bound at residue Arg90. Asp147 functions as the Proton donor/acceptor in the catalytic mechanism. ATP-binding positions include 207–211 (HLGNG), 283–285 (DMR), and 331–335 (GVGEN). Position 385 (Glu385) interacts with Mg(2+).

It belongs to the acetokinase family. Homodimer. Mg(2+) serves as cofactor. Requires Mn(2+) as cofactor.

The protein localises to the cytoplasm. The catalysed reaction is acetate + ATP = acetyl phosphate + ADP. Its pathway is metabolic intermediate biosynthesis; acetyl-CoA biosynthesis; acetyl-CoA from acetate: step 1/2. Its function is as follows. Catalyzes the formation of acetyl phosphate from acetate and ATP. Can also catalyze the reverse reaction. The polypeptide is Acetate kinase (Fervidobacterium nodosum (strain ATCC 35602 / DSM 5306 / Rt17-B1)).